The chain runs to 207 residues: Ribonuclease HII (207 aa).

Residues H19–E207 form the RNase H type-2 domain. A divalent metal cation contacts are provided by D25, E26, and D117.

It belongs to the RNase HII family. Mn(2+) serves as cofactor. Requires Mg(2+) as cofactor.

It is found in the cytoplasm. The catalysed reaction is Endonucleolytic cleavage to 5'-phosphomonoester.. Functionally, endonuclease that specifically degrades the RNA of RNA-DNA hybrids. The protein is Ribonuclease HII of Vibrio vulnificus (strain CMCP6).